The chain runs to 108 residues: Transcription factor S (108 aa).

Zn(2+) is bound by residues C5, C8, C21, C24, C69, C72, C97, and C100. The segment at 5–24 (CPKCNNLMLPKDGKLKCAVC) adopts a C4-type zinc-finger fold. Residues 65–105 (TRIECPKCGHNEAYWWLQQTRCADEPETRFYKCKKCGHTWR) form a TFIIS-type zinc finger.

The protein belongs to the archaeal RpoM/eukaryotic RPA12/RPB9/RPC11 RNA polymerase family.

Induces RNA cleavage activity in the RNA polymerase. In its presence, the cleavage activity of the RNA polymerase truncates the RNA back to position +15 in a stepwise manner by releasing mainly dinucleotides from the 3'-end of the nascent RNA. The truncated RNAs are able to continue elongation. Involved in transcriptional proofreading and fidelity. Misincorporation of nucleotides during elongation of transcription leads to arrested elongation complexes which are rescued by TFS-promoted removal of a dinucleotide from the 3'-end. TFS is able to induce a cleavage resynthesis cycle in stalled elongation complexes (resulting from the next missing nucleotide or a reduced incorporation rate of a wrong nucleotide) preventing misincorporation and enabling proofreading in a post-incorporation manner. Pausing of elongation complexes is the main determinant of TFS-induced RNA cleavage. In Methanocaldococcus jannaschii (strain ATCC 43067 / DSM 2661 / JAL-1 / JCM 10045 / NBRC 100440) (Methanococcus jannaschii), this protein is Transcription factor S.